We begin with the raw amino-acid sequence, 158 residues long: Putative 8-oxo-dGTP diphosphatase YtkD (158 aa).

A Nudix hydrolase domain is found at 6 to 145 (DYYQNTVQLS…SFIMKDSVLP (140 aa)). The short motif at 53–74 (GKVEPMECAEEAALREVKEETG) is the Nudix box element. The Mg(2+) site is built by glutamate 68 and glutamate 72.

It belongs to the Nudix hydrolase family. Mg(2+) serves as cofactor.

The enzyme catalyses 8-oxo-dGTP + H2O = 8-oxo-dGMP + diphosphate + H(+). Its activity is regulated as follows. Not induced by oxidative damage (following treatment with paraquat or hydrogen peroxide). Not induced by mitomycin C. Not induced by sigma-B general stress inducers such as sodium chloride, ethanol or heat. Involved in the GO system responsible for removing an oxidatively damaged form of guanine (7,8-dihydro-8-oxoguanine, 8-oxo-dGTP) from DNA and the nucleotide pool. 8-oxo-dGTP is inserted opposite dA and dC residues of template DNA with almost equal efficiency thus leading to A.T to G.C transversions. Functions, in conjunction with MutT, to protect vegetatively growing cells from DNA-damaging agents such as H(2)O(2) or t-BHP (t-butylhydroperoxide). The 2 proteins do not however protect spores. According to PubMed:15576788, phosphohydrolase that catalyzes the hydrolysis of all common nucleoside triphosphates as well as of the mutagenic analog 8-oxo-dGTP. The high catalytic efficiency on dGTP is in contrast to results from PubMed:14761999. According to PubMed:14761999, catalyzes the hydrolysis of 8-oxo-dGTP with a specific activity 413 times higher than that exhibited against dGTP. Preferentially catalyzes the hydrolysis of 8-oxo-dGTP and 8-oxo-GTP. According to PubMed:15576788, hydrolyzes nucleoside triphosphates in a stepwise fashion through the diphosphate to the monophosphate, releasing two molecules of inorganic orthophosphate. This Bacillus subtilis (strain 168) protein is Putative 8-oxo-dGTP diphosphatase YtkD (ytkD).